Reading from the N-terminus, the 310-residue chain is UPF0324 membrane protein GSU2818 (310 aa).

A run of 9 helical transmembrane segments spans residues F11–I33, M53–I72, I79–G97, S107–L129, T136–G158, A193–A215, I227–L244, L254–L273, and L286–W308.

It belongs to the UPF0324 family.

The protein localises to the cell membrane. This Geobacter sulfurreducens (strain ATCC 51573 / DSM 12127 / PCA) protein is UPF0324 membrane protein GSU2818.